The sequence spans 325 residues: Phospholipid phosphatase-related protein type 1 (325 aa).

A glycan (N-linked (GlcNAc...) asparagine) is linked at asparagine 5. 3 helical membrane-spanning segments follow: residues 13–33, 67–87, and 127–147; these read IIPCFIFVELVIMAGTVLLAY, FISPLVLYCVLAATPTAIIFI, and FIGVFAFGLFATDIFVNAGQV. An N-linked (GlcNAc...) asparagine glycan is attached at asparagine 163. The next 3 helical transmembrane spans lie at 201 to 219, 226 to 244, and 257 to 277; these read AALSIYSALYATMYITSTI, LAKPVLCLGDLCTAFLTGL, and VIAGFILGTAVALFLGMCVVH. A Phosphoserine modification is found at serine 307. Asparagine 316 is a glycosylation site (N-linked (GlcNAc...) asparagine).

The protein belongs to the PA-phosphatase related phosphoesterase family. Highly expressed in the brain. Also found in the liver, kidney and testis. In the brain shows a strongest expression in the hippocampus and cerebellum.

It is found in the cell membrane. The protein localises to the cell projection. The protein resides in the neuron projection. May play a role in neurite outgrowth and neurogenesis. The polypeptide is Phospholipid phosphatase-related protein type 1 (Rattus norvegicus (Rat)).